Consider the following 464-residue polypeptide: UDP-glycosyltransferase 83A1 (464 aa).

Residues Ser295, 341–343 (APQ), 358–366 (HCGWNSTLE), and 380–383 (FADQ) each bind UDP-alpha-D-glucose.

It belongs to the UDP-glycosyltransferase family.

This is UDP-glycosyltransferase 83A1 (UGT83A1) from Arabidopsis thaliana (Mouse-ear cress).